Here is a 406-residue protein sequence, read N- to C-terminus: MNFWTLLLPPIAGTVIGYFTNDIAINMLFRPYKAIYIGDRRLPFTPGLIPANQDRLARNISRIIMGSLLTPEEIQKLAQKLLQTERIEAAIRWLLQLAFAQIQGEQEQKTAGILAAILRDLASESLPRLIKVWSREDTFLEAQVYQIFDQLLLDFKLTEAQARQLTDWLLRTVLTPDILRQATIDFLTDKNIEIIDTSLREKTSGTYWVVANLFGVKNSLTRLRAFCLEEREIANARLQELILTLEIRLKLRLWLQGLSLQNLPVSTVRQLRKSFHQTIRQYFQNKGAGLMEYIGESVDWDNLSVVILRRLQASQVLDSSLGVVSQELSLLLDRYLEKDLEKIISQVIPILAIDQVIIERVNNTSPRELERAIQGIVKNELQAIVNLGGVLGFLVGVAQSVILLLN.

Residues 384–404 (IVNLGGVLGFLVGVAQSVILL) form a helical membrane-spanning segment.

This sequence belongs to the UPF0754 family.

Its subcellular location is the cell inner membrane. The protein is UPF0754 membrane protein SYNPCC7002_A1087 of Picosynechococcus sp. (strain ATCC 27264 / PCC 7002 / PR-6) (Agmenellum quadruplicatum).